The sequence spans 139 residues: Putative pre-16S rRNA nuclease (139 aa).

Belongs to the YqgF nuclease family.

It localises to the cytoplasm. Its function is as follows. Could be a nuclease involved in processing of the 5'-end of pre-16S rRNA. This is Putative pre-16S rRNA nuclease from Streptococcus mutans serotype c (strain ATCC 700610 / UA159).